The chain runs to 484 residues: Transcription factor MYB88 (484 aa).

The tract at residues 1–20 is disordered; it reads MEETTKQNNMKKKKKILLHS. Positions 13-20 match the Nuclear localization signal motif; that stretch reads KKKILLHS. 2 consecutive HTH myb-type domains span residues 25-76 and 77-131; these read KKER…YTYL and NSDF…KKRA. 2 DNA-binding regions (H-T-H motif) span residues 53 to 76 and 104 to 127; these read WAII…YTYL and WTEI…TTLC. Disordered stretches follow at residues 215 to 241, 321 to 383, and 458 to 484; these read NATS…DKSN, RSSN…GGEL, and GVES…LDSL. Residues 232 to 241 are compositionally biased toward basic and acidic residues; sequence KESDGEDKSN. Residues 339–348 show a composition bias toward low complexity; it reads SPASSEYSSG. The segment covering 354–380 has biased composition (polar residues); that stretch reads TIMTHPSGDKTQQLMSDTQTTSHQQNG. The span at 463 to 476 shows a compositional bias: pro residues; sequence SPYPSANPSQPPPC.

Interacts with RBR1. In terms of tissue distribution, expressed at low levels in all organs including roots, leaves, hypocotyls stems, flowers, siliques and buds.

Its subcellular location is the nucleus. Its function is as follows. Transcription factor that binds to DNA in promoters cis-regulatory element 5'-GGCGCGC-3' of cell cycle genes, including cyclins, cyclin-dependent kinases (CDKs), and components of the pre-replication complex. Binds to DNA in promoters cis-regulatory element 5'-AGCCG-3' of auxin regulated genes (e.g. PIN3 and PIN7). Together with FAMA and MYB124, ensures that stomata contain just two guard cells (GCs) by enforcing a single symmetric precursor cell division before stomatal maturity. Represses the expression of the mitosis-inducing factors CDKB1-1 and CDKA-1, specifically required for the last guard mother cells (GMC) symmetric divisions in the stomatal pathway. Represses CYCA2-3 in newly formed guard cells. Together with MYB88, regulates stomata spacing by restricting divisions late in the stomatal cell lineage thus limiting the number of GMC divisions. In collaboration with CDKB1-1 and CDKB1-2, restrict the G1/S transition and chloroplast and nuclear number during stomatal formation, and normally maintain fate and developmental progression throughout the stomatal cell lineage. Involved in sensing and/or transducing abiotic stress (e.g. drought and salt), probably via the positive regulation of NAC019. Regulates female reproduction being required for entry into megasporogenesis, probably via the regulation of cell cycle genes. Plays a minor role in lateral roots (LRs) initiation. Involved complementarily in establishing the gravitropic set-point angles of lateral roots by regulating the transcription of PIN3 and PIN7 in gravity-sensing cells of primary and lateral roots. In Arabidopsis thaliana (Mouse-ear cress), this protein is Transcription factor MYB88.